The sequence spans 157 residues: Heat shock 22 kDa protein, chloroplastic (157 aa).

The region spanning 40-155 is the sHSP domain; it reads GKAGHTHAPM…KPEPKRIAVT (116 aa).

Belongs to the small heat shock protein (HSP20) family.

It localises to the plastid. Its subcellular location is the chloroplast. This chain is Heat shock 22 kDa protein, chloroplastic, found in Chlamydomonas reinhardtii (Chlamydomonas smithii).